A 436-amino-acid chain; its full sequence is Xaa-Arg dipeptidase (436 aa).

This sequence belongs to the peptidase M20A family.

It catalyses the reaction beta-alanyl-L-lysine + H2O = beta-alanine + L-lysine. The enzyme catalyses beta-alanyl-L-ornithine + H2O = beta-alanine + L-ornithine. The catalysed reaction is N(2)-(4-aminobutanoyl)-L-lysine + H2O = 4-aminobutanoate + L-lysine. It carries out the reaction N(2)-(4-aminobutanoyl)-L-ornithine + H2O = 4-aminobutanoate + L-ornithine. It catalyses the reaction N(2)-(4-aminobutanoyl)-L-arginine + H2O = 4-aminobutanoate + L-arginine. In terms of biological role, catalyzes the peptide bond hydrolysis in dipeptides having basic amino acids lysine, ornithine or arginine at C-terminus. Postulated to function in a metabolite repair mechanism by eliminating alternate dipeptide by-products formed during carnosine synthesis. This is Xaa-Arg dipeptidase from Homo sapiens (Human).